The following is a 204-amino-acid chain: Anthranilate synthase component 2 (204 aa).

Residues 3–204 enclose the Glutamine amidotransferase type-1 domain; the sequence is RLVVVDNFDS…LTAVAGFDVA (202 aa). 58–60 serves as a coordination point for L-glutamine; the sequence is GPG. C88 acts as the Nucleophile; for GATase activity in catalysis. 138-139 serves as a coordination point for L-glutamine; sequence SL. Residues H178 and E180 each act as for GATase activity in the active site.

Heterotetramer consisting of two non-identical subunits: a beta subunit (TrpG) and a large alpha subunit (TrpE).

The enzyme catalyses chorismate + L-glutamine = anthranilate + pyruvate + L-glutamate + H(+). The protein operates within amino-acid biosynthesis; L-tryptophan biosynthesis; L-tryptophan from chorismate: step 1/5. In terms of biological role, part of a heterotetrameric complex that catalyzes the two-step biosynthesis of anthranilate, an intermediate in the biosynthesis of L-tryptophan. In the first step, the glutamine-binding beta subunit (TrpG) of anthranilate synthase (AS) provides the glutamine amidotransferase activity which generates ammonia as a substrate that, along with chorismate, is used in the second step, catalyzed by the large alpha subunit of AS (TrpE) to produce anthranilate. In the absence of TrpG, TrpE can synthesize anthranilate directly from chorismate and high concentrations of ammonia. The polypeptide is Anthranilate synthase component 2 (trpG) (Haloferax volcanii (strain ATCC 29605 / DSM 3757 / JCM 8879 / NBRC 14742 / NCIMB 2012 / VKM B-1768 / DS2) (Halobacterium volcanii)).